We begin with the raw amino-acid sequence, 136 residues long: Ubiquinol-cytochrome-c reductase complex assembly factor 2 (136 aa).

Residues 1–13 (MAALRYRRFLKLC) constitute a mitochondrion transit peptide.

In terms of assembly, interacts with UQCC1.

The protein resides in the mitochondrion matrix. It is found in the mitochondrion nucleoid. Its subcellular location is the mitochondrion. The protein localises to the mitochondrion intermembrane space. It localises to the mitochondrion inner membrane. In terms of biological role, required for the assembly of the ubiquinol-cytochrome c reductase complex (mitochondrial respiratory chain complex III or cytochrome b-c1 complex). Plays a role in the modulation of respiratory chain activities such as oxygen consumption and ATP production and via its modulation of the respiratory chain activity can regulate skeletal muscle differentiation and insulin secretion by pancreatic beta-cells. Involved in cytochrome b translation and/or stability. This is Ubiquinol-cytochrome-c reductase complex assembly factor 2 (Uqcc2) from Rattus norvegicus (Rat).